The primary structure comprises 611 residues: Methionine--tRNA ligase (611 aa).

The 'HIGH' region motif lies at 12–22; that stretch reads PYANGPRHIGH. Cys144, Cys147, Cys157, and Cys160 together coordinate Zn(2+). The 'KMSKS' region signature appears at 348–352; that stretch reads KFSSS. ATP is bound at residue Ser351.

Belongs to the class-I aminoacyl-tRNA synthetase family. MetG type 1 subfamily. As to quaternary structure, monomer. Zn(2+) is required as a cofactor.

Its subcellular location is the cytoplasm. The enzyme catalyses tRNA(Met) + L-methionine + ATP = L-methionyl-tRNA(Met) + AMP + diphosphate. Functionally, is required not only for elongation of protein synthesis but also for the initiation of all mRNA translation through initiator tRNA(fMet) aminoacylation. This Corynebacterium urealyticum (strain ATCC 43042 / DSM 7109) protein is Methionine--tRNA ligase.